Reading from the N-terminus, the 365-residue chain is D-alanine--D-alanine ligase (365 aa).

An ATP-grasp domain is found at K140–Y346. Residue E173–E228 coordinates ATP. Residues D299, E313, and N315 each contribute to the Mg(2+) site.

The protein belongs to the D-alanine--D-alanine ligase family. It depends on Mg(2+) as a cofactor. Mn(2+) is required as a cofactor.

Its subcellular location is the cytoplasm. It catalyses the reaction 2 D-alanine + ATP = D-alanyl-D-alanine + ADP + phosphate + H(+). Its pathway is cell wall biogenesis; peptidoglycan biosynthesis. Functionally, cell wall formation. This chain is D-alanine--D-alanine ligase, found in Natranaerobius thermophilus (strain ATCC BAA-1301 / DSM 18059 / JW/NM-WN-LF).